We begin with the raw amino-acid sequence, 181 residues long: Insulin-like growth factor 2 (181 aa).

The signal sequence occupies residues 1–24; it reads MGIPVGKSLLMLFTFLAFASCCIA. Residues 25-52 form a b region; the sequence is AYRPSETLCGGELVDTLQFVCGDRGFYF. Cystine bridges form between Cys33–Cys71, Cys45–Cys84, and Cys70–Cys75. Residues 53-64 are c; sequence SRPASRINRRSR. The interval 65 to 85 is a; sequence GIVEECCFRSCDLALLETYCA. Positions 86-91 are d; it reads TPAKSE. Positions 92-181 are cleaved as a propeptide — e peptide; sequence RDVSTPPTVL…AFVEVSSDLQ (90 aa). O-linked (GalNAc...) threonine glycosylation occurs at Thr163.

It belongs to the insulin family. In terms of assembly, interacts with MYORG; this interaction is required for IGF2 secretion. Interacts with integrins ITGAV:ITGB3 and ITGA6:ITGB4; integrin-binding is required for IGF2 signaling. Interacts with IGFBP2. Proteolytically processed by PCSK4, proIGF2 is cleaved at Arg-128 and Arg-92 to generate big-IGF2 and mature IGF2.

It is found in the secreted. Functionally, the insulin-like growth factors possess growth-promoting activity. Major fetal growth hormone in mammals. Plays a key role in regulating fetoplacental development. IGF2 is influenced by placental lactogen. Also involved in tissue differentiation. In adults, involved in glucose metabolism in adipose tissue, skeletal muscle and liver. Acts as a ligand for integrin which is required for IGF2 signaling. Positively regulates myogenic transcription factor MYOD1 function by facilitating the recruitment of transcriptional coactivators, thereby controlling muscle terminal differentiation. Inhibits myoblast differentiation and modulates metabolism via increasing the mitochondrial respiration rate. Preptin undergoes glucose-mediated co-secretion with insulin, and acts as a physiological amplifier of glucose-mediated insulin secretion. Exhibits osteogenic properties by increasing osteoblast mitogenic activity through phosphoactivation of MAPK1 and MAPK3. In Equus caballus (Horse), this protein is Insulin-like growth factor 2.